Reading from the N-terminus, the 867-residue chain is Translation initiation factor IF-2 (867 aa).

The 168-residue stretch at 367–534 (TRAPVVTIMG…AILLQSEILE (168 aa)) folds into the tr-type G domain. The segment at 376–383 (GHVDHGKT) is G1. 376–383 (GHVDHGKT) contributes to the GTP binding site. Residues 401–405 (GITQN) are G2. The segment at 422-425 (DTPG) is G3. GTP is bound by residues 422 to 426 (DTPGH) and 476 to 479 (NKID). The segment at 476 to 479 (NKID) is G4. Residues 512-514 (SAK) are G5.

The protein belongs to the TRAFAC class translation factor GTPase superfamily. Classic translation factor GTPase family. IF-2 subfamily.

The protein localises to the cytoplasm. Functionally, one of the essential components for the initiation of protein synthesis. Protects formylmethionyl-tRNA from spontaneous hydrolysis and promotes its binding to the 30S ribosomal subunits. Also involved in the hydrolysis of GTP during the formation of the 70S ribosomal complex. This chain is Translation initiation factor IF-2, found in Buchnera aphidicola subsp. Schizaphis graminum (strain Sg).